The chain runs to 363 residues: Putative agmatine deiminase (363 aa).

Residues 1–10 (MTKQLSTSPK) are compositionally biased toward polar residues. The tract at residues 1–20 (MTKQLSTSPKQDGFRMPAEH) is disordered. Cys355 (amidino-cysteine intermediate) is an active-site residue.

Belongs to the agmatine deiminase family.

It catalyses the reaction agmatine + H2O = N-carbamoylputrescine + NH4(+). The chain is Putative agmatine deiminase from Photobacterium profundum (strain SS9).